Consider the following 384-residue polypeptide: Bifunctional enzyme IspD/IspF (384 aa).

The interval 1 to 226 (MAKTVVLVVA…RCLFDGPGEV (226 aa)) is 2-C-methyl-D-erythritol 4-phosphate cytidylyltransferase. The segment at 227–384 (RSASGYDVHR…QAMASVWLPR (158 aa)) is 2-C-methyl-D-erythritol 2,4-cyclodiphosphate synthase. 2 residues coordinate a divalent metal cation: D233 and H235. Residues 233-235 (DVH) and 260-261 (HS) each bind 4-CDP-2-C-methyl-D-erythritol 2-phosphate. Position 268 (H268) interacts with a divalent metal cation. 4-CDP-2-C-methyl-D-erythritol 2-phosphate contacts are provided by residues 282–284 (DIG), 358–361 (TTTE), F365, and R368.

In the N-terminal section; belongs to the IspD/TarI cytidylyltransferase family. IspD subfamily. This sequence in the C-terminal section; belongs to the IspF family. The cofactor is a divalent metal cation.

The enzyme catalyses 2-C-methyl-D-erythritol 4-phosphate + CTP + H(+) = 4-CDP-2-C-methyl-D-erythritol + diphosphate. The catalysed reaction is 4-CDP-2-C-methyl-D-erythritol 2-phosphate = 2-C-methyl-D-erythritol 2,4-cyclic diphosphate + CMP. Its pathway is isoprenoid biosynthesis; isopentenyl diphosphate biosynthesis via DXP pathway; isopentenyl diphosphate from 1-deoxy-D-xylulose 5-phosphate: step 2/6. The protein operates within isoprenoid biosynthesis; isopentenyl diphosphate biosynthesis via DXP pathway; isopentenyl diphosphate from 1-deoxy-D-xylulose 5-phosphate: step 4/6. Bifunctional enzyme that catalyzes the formation of 4-diphosphocytidyl-2-C-methyl-D-erythritol from CTP and 2-C-methyl-D-erythritol 4-phosphate (MEP) (IspD), and catalyzes the conversion of 4-diphosphocytidyl-2-C-methyl-D-erythritol 2-phosphate (CDP-ME2P) to 2-C-methyl-D-erythritol 2,4-cyclodiphosphate (ME-CPP) with a corresponding release of cytidine 5-monophosphate (CMP) (IspF). The polypeptide is Bifunctional enzyme IspD/IspF (Paramagnetospirillum magneticum (strain ATCC 700264 / AMB-1) (Magnetospirillum magneticum)).